The sequence spans 553 residues: Vacuolar fusion protein MON1 homolog B (553 aa).

Met1 carries the post-translational modification N-acetylmethionine. Disordered regions lie at residues 1–111 (MEAG…DEDW) and 534–553 (STPPSTSADQAPNNGLFTGL). Positions 23–35 (FPREEAGDSERVH) are enriched in basic and acidic residues. A compositionally biased stretch (polar residues) spans 52 to 72 (KDQPSSLLSPLPQTEAASSTC). Ser57 is modified (phosphoserine). Positions 78–95 (AAASDSSPPGEPESNSEG) are enriched in low complexity. Residues 96–108 (QGEDPDDGGDPSD) are compositionally biased toward acidic residues. Residues 541 to 553 (ADQAPNNGLFTGL) show a composition bias toward polar residues.

It belongs to the MON1/SAND family. In terms of assembly, interacts with CCNT2; down-regulates CCNT2-mediated activation of viral promoters during herpes simplex virus 1/HHV-1 infection. Found in a complex with RMC1, CCZ1 MON1A and MON1B.

In Mus musculus (Mouse), this protein is Vacuolar fusion protein MON1 homolog B (Mon1b).